The sequence spans 282 residues: Biotin synthase (282 aa).

In terms of domain architecture, Radical SAM core spans 1–228; that stretch reads MQEIFLCSIS…NARLMVAGGR (228 aa). [4Fe-4S] cluster contacts are provided by Cys17, Cys21, and Cys24. Residues Cys61, Cys96, Cys154, and Arg221 each contribute to the [2Fe-2S] cluster site.

It belongs to the radical SAM superfamily. Biotin synthase family. As to quaternary structure, homodimer. It depends on [4Fe-4S] cluster as a cofactor. The cofactor is [2Fe-2S] cluster.

It carries out the reaction (4R,5S)-dethiobiotin + (sulfur carrier)-SH + 2 reduced [2Fe-2S]-[ferredoxin] + 2 S-adenosyl-L-methionine = (sulfur carrier)-H + biotin + 2 5'-deoxyadenosine + 2 L-methionine + 2 oxidized [2Fe-2S]-[ferredoxin]. It functions in the pathway cofactor biosynthesis; biotin biosynthesis; biotin from 7,8-diaminononanoate: step 2/2. Functionally, catalyzes the conversion of dethiobiotin (DTB) to biotin by the insertion of a sulfur atom into dethiobiotin via a radical-based mechanism. The sequence is that of Biotin synthase from Helicobacter pylori (strain G27).